We begin with the raw amino-acid sequence, 202 residues long: FMN-dependent NADH:quinone oxidoreductase (202 aa).

Residues Ser9, 15 to 17 (SVS), 95 to 98 (MYNF), and 139 to 142 (SRGG) each bind FMN.

The protein belongs to the azoreductase type 1 family. In terms of assembly, homodimer. Requires FMN as cofactor.

The catalysed reaction is 2 a quinone + NADH + H(+) = 2 a 1,4-benzosemiquinone + NAD(+). It catalyses the reaction N,N-dimethyl-1,4-phenylenediamine + anthranilate + 2 NAD(+) = 2-(4-dimethylaminophenyl)diazenylbenzoate + 2 NADH + 2 H(+). Functionally, quinone reductase that provides resistance to thiol-specific stress caused by electrophilic quinones. Its function is as follows. Also exhibits azoreductase activity. Catalyzes the reductive cleavage of the azo bond in aromatic azo compounds to the corresponding amines. This is FMN-dependent NADH:quinone oxidoreductase from Laribacter hongkongensis (strain HLHK9).